A 572-amino-acid chain; its full sequence is Sulfite reductase [NADPH] hemoprotein beta-component (572 aa).

Positions 437, 443, 482, and 486 each coordinate [4Fe-4S] cluster. A siroheme-binding site is contributed by Cys-486.

The protein belongs to the nitrite and sulfite reductase 4Fe-4S domain family. Alpha(8)-beta(8). The alpha component is a flavoprotein, the beta component is a hemoprotein. The cofactor is siroheme. [4Fe-4S] cluster serves as cofactor.

The catalysed reaction is hydrogen sulfide + 3 NADP(+) + 3 H2O = sulfite + 3 NADPH + 4 H(+). Its pathway is sulfur metabolism; hydrogen sulfide biosynthesis; hydrogen sulfide from sulfite (NADPH route): step 1/1. Component of the sulfite reductase complex that catalyzes the 6-electron reduction of sulfite to sulfide. This is one of several activities required for the biosynthesis of L-cysteine from sulfate. The polypeptide is Sulfite reductase [NADPH] hemoprotein beta-component (Staphylococcus epidermidis (strain ATCC 12228 / FDA PCI 1200)).